The primary structure comprises 757 residues: Glutathione biosynthesis bifunctional protein GshAB (757 aa).

Residues 1-337 (MNIQQIVKEK…LGRARLGEVA (337 aa)) are glutamate--cysteine ligase. One can recognise an ATP-grasp domain in the interval 494–757 (KKVLAKAGFN…VLGMLFPELV (264 aa)). 521–580 (PLFEGKAVVIKPKSTNFGLGISIFQQGVHDKADFAKAVEIAFREDKEVMVEDYLVGTEYR) is a binding site for ATP. The Mg(2+) site is built by D702, E723, and N725. 3 residues coordinate Mn(2+): D702, E723, and N725.

In the N-terminal section; belongs to the glutamate--cysteine ligase type 1 family. Type 2 subfamily. Monomer. It depends on Mg(2+) as a cofactor. The cofactor is Mn(2+).

It carries out the reaction L-cysteine + L-glutamate + ATP = gamma-L-glutamyl-L-cysteine + ADP + phosphate + H(+). It catalyses the reaction gamma-L-glutamyl-L-cysteine + glycine + ATP = glutathione + ADP + phosphate + H(+). The protein operates within sulfur metabolism; glutathione biosynthesis; glutathione from L-cysteine and L-glutamate: step 1/2. It functions in the pathway sulfur metabolism; glutathione biosynthesis; glutathione from L-cysteine and L-glutamate: step 2/2. Functionally, synthesizes glutathione from L-glutamate and L-cysteine via gamma-L-glutamyl-L-cysteine. This chain is Glutathione biosynthesis bifunctional protein GshAB, found in Mannheimia succiniciproducens (strain KCTC 0769BP / MBEL55E).